A 396-amino-acid chain; its full sequence is Jacalin-related lectin 45 (396 aa).

3 consecutive Jacalin-type lectin domains span residues 3-138 (KKVT…KTSH), 144-264 (QFRM…NFAV), and 270-392 (VKKL…YVKP).

The protein belongs to the jacalin lectin family.

This is Jacalin-related lectin 45 (JAL45) from Arabidopsis thaliana (Mouse-ear cress).